Consider the following 883-residue polypeptide: Phosphoenolpyruvate carboxylase (883 aa).

Catalysis depends on residues H138 and K546.

This sequence belongs to the PEPCase type 1 family. Mg(2+) is required as a cofactor.

It catalyses the reaction oxaloacetate + phosphate = phosphoenolpyruvate + hydrogencarbonate. In terms of biological role, forms oxaloacetate, a four-carbon dicarboxylic acid source for the tricarboxylic acid cycle. This Escherichia coli O81 (strain ED1a) protein is Phosphoenolpyruvate carboxylase.